We begin with the raw amino-acid sequence, 130 residues long: Iron-sulfur cluster assembly 1 homolog, mitochondrial (130 aa).

The N-terminal 24 residues, 1-24, are a transit peptide targeting the mitochondrion; it reads MATRVVATATVRAVKGRKLIPTRA. 3 residues coordinate Fe cation: cysteine 58, cysteine 122, and cysteine 124.

The protein belongs to the HesB/IscA family. Interacts with cry. Detected in head.

The protein resides in the mitochondrion. Involved in the assembly of mitochondrial iron-sulfur proteins. Probably involved in the binding of an intermediate of Fe/S cluster assembly. Required for maintenance of circadian rhythms under constant darkness. The protein is Iron-sulfur cluster assembly 1 homolog, mitochondrial of Drosophila melanogaster (Fruit fly).